A 320-amino-acid chain; its full sequence is MIFSTLEHILIHISFSVVSIVITIYFLTLLVDEIVGLYDSSDKGMIVTFFCITGLLAARWIYSGHFPLSNLYESLIFLSWSFSIIHMVCYFNKKHKNNLNAITGPSAILTQGFATSGLLNKMSQSVILVPALQSQWLMMHVSMMVLGYAALLCGSLLSVALLVITFRKVIRIFGKSNNFLNESFSFGKIQYMNERSNILLNTSFLSSRNYYRYQLIQQLDHWSYRIISLGFIFLTIGILSGAVWANEAWGSYWNWDPKETWAFITWTIFAIYLHIRTNINLGGINSAIVASMGFLIIWICYFGVNLLGIGLHSYGSFTLT.

The next 8 helical transmembrane spans lie at 9–29 (ILIH…FLTL), 44–64 (GMIV…IYSG), 71–91 (LYES…VCYF), 99–119 (LNAI…SGLL), 144–164 (MVLG…LLVI), 226–246 (IISL…VWAN), 261–281 (WAFI…NINL), and 287–307 (AIVA…VNLL).

The protein belongs to the CcmF/CycK/Ccl1/NrfE/CcsA family. May interact with Ccs1.

It is found in the plastid. It localises to the chloroplast thylakoid membrane. In terms of biological role, required during biogenesis of c-type cytochromes (cytochrome c6 and cytochrome f) at the step of heme attachment. In Carica papaya (Papaya), this protein is Cytochrome c biogenesis protein CcsA.